The chain runs to 508 residues: Probable cytosol aminopeptidase (508 aa).

Mn(2+) is bound by residues lysine 274 and aspartate 279. Lysine 286 is an active-site residue. Mn(2+) contacts are provided by aspartate 297, aspartate 356, and glutamate 358. Arginine 360 is a catalytic residue.

Belongs to the peptidase M17 family. The cofactor is Mn(2+).

Its subcellular location is the cytoplasm. The enzyme catalyses Release of an N-terminal amino acid, Xaa-|-Yaa-, in which Xaa is preferably Leu, but may be other amino acids including Pro although not Arg or Lys, and Yaa may be Pro. Amino acid amides and methyl esters are also readily hydrolyzed, but rates on arylamides are exceedingly low.. The catalysed reaction is Release of an N-terminal amino acid, preferentially leucine, but not glutamic or aspartic acids.. Its function is as follows. Presumably involved in the processing and regular turnover of intracellular proteins. Catalyzes the removal of unsubstituted N-terminal amino acids from various peptides. In Cutibacterium acnes (strain DSM 16379 / KPA171202) (Propionibacterium acnes), this protein is Probable cytosol aminopeptidase.